The primary structure comprises 781 residues: Protein translocase subunit SecA 2 (781 aa).

Residues glutamine 85, 103–107 (GEGKT), and aspartate 491 each bind ATP.

The protein belongs to the SecA family. Monomer and homodimer. Part of the essential Sec protein translocation apparatus which comprises SecA, SecYEG and auxiliary proteins SecDF. Other proteins may also be involved.

It localises to the cell membrane. The protein localises to the cytoplasm. The enzyme catalyses ATP + H2O + cellular proteinSide 1 = ADP + phosphate + cellular proteinSide 2.. Part of the Sec protein translocase complex. Interacts with the SecYEG preprotein conducting channel. Has a central role in coupling the hydrolysis of ATP to the transfer of proteins into and across the cell membrane, serving as an ATP-driven molecular motor driving the stepwise translocation of polypeptide chains across the membrane. This is Protein translocase subunit SecA 2 from Clostridioides difficile (strain 630) (Peptoclostridium difficile).